The following is a 281-amino-acid chain: Probable endonuclease 4 (281 aa).

Positions 69, 109, 145, 179, 182, 216, 229, 231, and 261 each coordinate Zn(2+).

It belongs to the AP endonuclease 2 family. Requires Zn(2+) as cofactor.

It catalyses the reaction Endonucleolytic cleavage to 5'-phosphooligonucleotide end-products.. Its function is as follows. Endonuclease IV plays a role in DNA repair. It cleaves phosphodiester bonds at apurinic or apyrimidinic (AP) sites, generating a 3'-hydroxyl group and a 5'-terminal sugar phosphate. The protein is Probable endonuclease 4 of Chlorobaculum parvum (strain DSM 263 / NCIMB 8327) (Chlorobium vibrioforme subsp. thiosulfatophilum).